A 153-amino-acid chain; its full sequence is Coiled-coil-helix-coiled-coil-helix domain-containing protein 2 (153 aa).

2 disordered regions span residues 1–51 (MPRG…AAPR) and 78–106 (HAIT…QGAQ). A compositionally biased stretch (low complexity) spans 14-51 (PPASRAPQMRAAPRRAPAAQPPAAAAPSAVGSPAAAPR). A CHCH domain is found at 113–153 (FGPCSLEIKQFLECAQNQSDVKLCEGFNEVLRQCRIANGLM). 2 consecutive short sequence motifs (cx9C motif) follow at residues 116–126 (CSLEIKQFLEC) and 136–146 (CEGFNEVLRQC). Cystine bridges form between cysteine 116-cysteine 146 and cysteine 126-cysteine 136.

As to quaternary structure, interacts with RBPJ.

Its subcellular location is the nucleus. The protein resides in the mitochondrion. The protein localises to the mitochondrion intermembrane space. In terms of biological role, transcription factor. Binds to the oxygen responsive element of COX4I2 and activates its transcription under hypoxia conditions (4% oxygen), as well as normoxia conditions (20% oxygen). This chain is Coiled-coil-helix-coiled-coil-helix domain-containing protein 2 (Chchd2), found in Mus musculus (Mouse).